A 273-amino-acid chain; its full sequence is Galactose-binding lectin (273 aa).

The first 23 residues, 1 to 23, serve as a signal peptide directing secretion; the sequence is MKPFCVFLTFFLLLAASSKKVDS. Residues E144 and D146 each coordinate Mn(2+). Residues D146, Y148, N150, and D155 each contribute to the Ca(2+) site. 2 residues coordinate Mn(2+): D155 and H160.

The protein belongs to the leguminous lectin family. In terms of assembly, homotetramer.

Functionally, D-galactose specific lectin. The sequence is that of Galactose-binding lectin from Arachis hypogaea (Peanut).